Reading from the N-terminus, the 126-residue chain is Class I hydrophobin 1 (126 aa).

The first 16 residues, 1–16, serve as a signal peptide directing secretion; the sequence is MQYMTIVAFLAATVAA. Cystine bridges form between cysteine 38-cysteine 100, cysteine 46-cysteine 94, cysteine 47-cysteine 75, and cysteine 101-cysteine 119.

The protein belongs to the fungal hydrophobin family.

The protein resides in the secreted. The protein localises to the cell wall. Its function is as follows. Aerial growth, conidiation, and dispersal of filamentous fungi in the environment rely upon a capability of their secreting small amphipathic proteins called hydrophobins (HPBs) with low sequence identity. Class I can self-assemble into an outermost layer of rodlet bundles on aerial cell surfaces, conferring cellular hydrophobicity that supports fungal growth, development and dispersal; whereas Class II form highly ordered films at water-air interfaces through intermolecular interactions but contribute nothing to the rodlet structure. HYD1 and HYD2 are required for the structural integrity of the long aerial chains of microconidia. Does not seem to be important for the ability to cause seedling disease. The polypeptide is Class I hydrophobin 1 (Gibberella moniliformis (Maize ear and stalk rot fungus)).